The sequence spans 179 residues: Probable inosine/xanthosine triphosphatase (179 aa).

13–18 (STNPVK) provides a ligand contact to substrate. Residue Gln-70 coordinates Mg(2+).

It belongs to the YjjX NTPase family. Homodimer. Mg(2+) serves as cofactor. Mn(2+) is required as a cofactor.

The catalysed reaction is XTP + H2O = XDP + phosphate + H(+). It carries out the reaction ITP + H2O = IDP + phosphate + H(+). Its function is as follows. Phosphatase that hydrolyzes non-canonical purine nucleotides such as XTP and ITP to their respective diphosphate derivatives. Probably excludes non-canonical purines from DNA/RNA precursor pool, thus preventing their incorporation into DNA/RNA and avoiding chromosomal lesions. The polypeptide is Probable inosine/xanthosine triphosphatase (Methanocaldococcus jannaschii (strain ATCC 43067 / DSM 2661 / JAL-1 / JCM 10045 / NBRC 100440) (Methanococcus jannaschii)).